Reading from the N-terminus, the 259-residue chain is MNLLEKTRQLNTMLQQEASAHVDFKEMADKMREVLESNTFIVSRRGRLLGFAIKQQIENDRMKAFLVDRQFPEPYASNLFNVKETTANIDIDSEYTAFPVENHDLFLNSKTTIVPIIGGGERLGTLVLGRLANEFTEDDLVLAEYSATVVGMEILREKAAEAETSARKKAVVQMAINSLSYSELEAIEHIFEELGGNEGLLVASKIADRVGITRSVIVNALRKLESAGVIESRSLGMKGTYIKILNDNFLFELQKLKSN.

Positions 1–155 (MNLLEKTRQL…SATVVGMEIL (155 aa)) are GAF domain. Positions 203–222 (ASKIADRVGITRSVIVNALR) form a DNA-binding region, H-T-H motif.

The protein belongs to the CodY family.

Its subcellular location is the cytoplasm. Its function is as follows. DNA-binding global transcriptional regulator which is involved in the adaptive response to starvation and acts by directly or indirectly controlling the expression of numerous genes in response to nutrient availability. During rapid exponential growth, CodY is highly active and represses genes whose products allow adaptation to nutrient depletion. In Exiguobacterium sp. (strain ATCC BAA-1283 / AT1b), this protein is Global transcriptional regulator CodY.